The sequence spans 431 residues: Protein translocase subunit SecY (431 aa).

Residues Met1 to Lys17 are Cytoplasmic-facing. The helical transmembrane segment at Ile18–Tyr38 threads the bilayer. The Extracellular segment spans residues Val39–Gln66. A helical transmembrane segment spans residues Phe67–Leu87. Residues Gln88–Tyr115 are Cytoplasmic-facing. The chain crosses the membrane as a helical span at residues Phe116 to Ala136. At Asn137–Gly145 the chain is on the extracellular side. A helical membrane pass occupies residues Val146–Leu166. Residues Gly167–Asn177 lie on the Cytoplasmic side of the membrane. Residues Gly178–Ile198 traverse the membrane as a helical segment. The Extracellular segment spans residues Tyr199–His213. The helical transmembrane segment at Ile214–Ile234 threads the bilayer. Topologically, residues Gln235 to His261 are cytoplasmic. The chain crosses the membrane as a helical span at residues Leu262–Ile282. At Thr283 to His308 the chain is on the extracellular side. Residues Pro309–Val329 traverse the membrane as a helical segment. Residues Gln330 to Thr368 lie on the Cytoplasmic side of the membrane. 2 helical membrane-spanning segments follow: residues Phe369–Ala389 and Gly390–Leu410. Residues Glu411–Asn431 lie on the Cytoplasmic side of the membrane.

Belongs to the SecY/SEC61-alpha family. Component of the Sec protein translocase complex. Heterotrimer consisting of SecY, SecE and SecG subunits. The heterotrimers can form oligomers, although 1 heterotrimer is thought to be able to translocate proteins. Interacts with the ribosome. Interacts with SecDF, and other proteins may be involved. Interacts with SecA. Interacts with FloT.

The protein localises to the cell membrane. It localises to the membrane raft. Its function is as follows. The central subunit of the protein translocation channel SecYEG. Consists of two halves formed by TMs 1-5 and 6-10. These two domains form a lateral gate at the front which open onto the bilayer between TMs 2 and 7, and are clamped together by SecE at the back. The channel is closed by both a pore ring composed of hydrophobic SecY resides and a short helix (helix 2A) on the extracellular side of the membrane which forms a plug. The plug probably moves laterally to allow the channel to open. The ring and the pore may move independently. In Bacillus subtilis (strain 168), this protein is Protein translocase subunit SecY.